A 105-amino-acid polypeptide reads, in one-letter code: UPF0145 protein AHA_2580 (105 aa).

It belongs to the UPF0145 family.

This Aeromonas hydrophila subsp. hydrophila (strain ATCC 7966 / DSM 30187 / BCRC 13018 / CCUG 14551 / JCM 1027 / KCTC 2358 / NCIMB 9240 / NCTC 8049) protein is UPF0145 protein AHA_2580.